The following is a 1520-amino-acid chain: MNKKFKYKKSLLAAILSATLLAGCDGGGSGSSSDTPPVDSGTGSLPEVKPDPTPNPEPTPEPTPDPEPTPEPIPDPEPTPEPEPEPVPTKTGYLTLGGSQRVTGATCNGESSDGFTFKPGEDVTCVAGNTTIATFNTQSEAARSLRAVEKVSFSLEDAQELAGSDDKKSNAVSLVTSSNSCPANTEQVCLTFSSVIESKRFDSLYKQIDLAPEEFKKLVNEEVENNAATDKAPSTHTSPVVPVTTPGTKPDLNASFVSANAEQFYQYQPTEIILSEGRLVDSQGYGVAGVNYYTNSGRGVTGENGEFSFSWGETISFGIDTFELGSVRGNKSTIALTELGDEVRGANIDQLIHRYSTTGQNNTRVVPDDVRKVFAEYPNVINEIINLSLSNGATLGEGEQVVNLPNEFIEQFNTGQAKEIDTAICAKTDGCNEARWFSLTTRNVNDGQIQGVINKLWGVDTNYKSVSKFHVFHDSTNFYGSTGNARGQAVVNISNAAFPILMARNDKNYWLAFGEKRAWDKNELAYITEAPSLVEPENVTRDTATFNLPFISLGQVGEGKLMVIGNPHYNSILRCPNGYSWNGGVNKDGQCTLNSDPDDMKNFMENVLRYLSDDKWKPDAKASMTVGTNLDTVYFKRHGQVTGNSAAFDFHPDFAGISVEHLSSYGDLDPQEMPLLILNGFEYVTQVGNDPYAIPLRADTSKPKLTQQDVTDLIAYLNKGGSVLIMENVMSNLKEESASGFVRLLDAAGLSMALNKSVVNNDPQGYPNRVRQQRATGIWVYERYPAVDGALPYTIDSKTGEVKWKYQVENKPDDKPKLEVASWLEDVDGKQETRYAFIDEADHKTEDSLKAAKEKIFAAFPGLKECTNPAYHYEVNCLEYRPGTGVPVTGGMYVPQYTQLSLNADTAKAMVQAADLGTNIQRLYQHELYFRTNGRKGERLSSVDLERLYQNMSVWLWNDTSYRYEEGKNDELGFKTFTEFLNCYANDAYAGGTKCSADLKKSLVDNNMIYGDGSSKAGMMNPSYPLNYMEKPLTRLMLGRSWWDLNIKVDVEKYPGAVSEEGQNVTETISLYSNPTKWFAGNMQSTGLWAPAQKEVTIKSNANVPVTVTVALADDLTGREKHEVALNRPPRVTKTYSLDASGTVKFKVPYGGLIYIKGNSSTNESASFTFTGVVKAPFYKDGAWKNDLNSPAPLGELESDAFVYTTPKKNLNASNYTGGLEQFANDLDTFASSMNDFYGRDSEDGKHRMFTYKNLPGHKHRFTNDVQISIGDAHSGYPVMNSSFSPNSTTLPTTPLNDWLIWHEVGHNAAETPLTVPGATEVANNVLALYMQDRYLGKMNRVADDITVAPEYLEESNNQAWARGGAGDRLLMYAQLKEWAEKNFDIKKWYPDGTPLPEFYSEREGMKGWNLFQLMHRKARGDEVSNDKFGGKNYCAESNGNAADTLMLCASWVAQTDLSEFFKKWNPGANAYQLPGASEMSFEGGVSQSAYNTLASLDLPKPEQGPETINQVTEHKMSAE.

Residues 1-23 (MNKKFKYKKSLLAAILSATLLAG) form the signal peptide. 2 disordered regions span residues 22 to 107 (AGCD…GATC) and 226 to 247 (NAAT…TTPG). The N-palmitoyl cysteine moiety is linked to residue cysteine 24. Cysteine 24 carries the S-diacylglycerol cysteine lipid modification. Low complexity predominate over residues 31-42 (SSSDTPPVDSGT). Pro residues predominate over residues 51–77 (DPTPNPEPTPEPTPDPEPTPEPIPDPE). Residues 97–107 (GGSQRVTGATC) are compositionally biased toward polar residues. A compositionally biased stretch (low complexity) spans 234-247 (STHTSPVVPVTTPG). The 301-residue stretch at 1081 to 1381 (GNMQSTGLWA…MYAQLKEWAE (301 aa)) folds into the Peptidase M60 domain. The interval 1498 to 1520 (DLPKPEQGPETINQVTEHKMSAE) is disordered.

To V.cholerae AcfD (VC_0845).

The protein localises to the cell inner membrane. Its function is as follows. Involved in a type II secretion system (T2SS, formerly general secretion pathway, GSP) for the export of folded proteins across the outer membrane. The chain is Putative lipoprotein AcfD homolog (yghJ) from Escherichia coli (strain K12).